A 160-amino-acid chain; its full sequence is SsrA-binding protein (160 aa).

Positions 132 to 160 are disordered; it reads KEFDKRDTMRERDSNRELQRAVRNKGKEE.

This sequence belongs to the SmpB family.

It localises to the cytoplasm. Its function is as follows. Required for rescue of stalled ribosomes mediated by trans-translation. Binds to transfer-messenger RNA (tmRNA), required for stable association of tmRNA with ribosomes. tmRNA and SmpB together mimic tRNA shape, replacing the anticodon stem-loop with SmpB. tmRNA is encoded by the ssrA gene; the 2 termini fold to resemble tRNA(Ala) and it encodes a 'tag peptide', a short internal open reading frame. During trans-translation Ala-aminoacylated tmRNA acts like a tRNA, entering the A-site of stalled ribosomes, displacing the stalled mRNA. The ribosome then switches to translate the ORF on the tmRNA; the nascent peptide is terminated with the 'tag peptide' encoded by the tmRNA and targeted for degradation. The ribosome is freed to recommence translation, which seems to be the essential function of trans-translation. This Pseudomonas putida (strain ATCC 47054 / DSM 6125 / CFBP 8728 / NCIMB 11950 / KT2440) protein is SsrA-binding protein.